A 72-amino-acid polypeptide reads, in one-letter code: Exodeoxyribonuclease 7 small subunit (72 aa).

It belongs to the XseB family. As to quaternary structure, heterooligomer composed of large and small subunits.

The protein localises to the cytoplasm. The enzyme catalyses Exonucleolytic cleavage in either 5'- to 3'- or 3'- to 5'-direction to yield nucleoside 5'-phosphates.. Bidirectionally degrades single-stranded DNA into large acid-insoluble oligonucleotides, which are then degraded further into small acid-soluble oligonucleotides. This chain is Exodeoxyribonuclease 7 small subunit, found in Chlamydia trachomatis serovar L2 (strain ATCC VR-902B / DSM 19102 / 434/Bu).